We begin with the raw amino-acid sequence, 129 residues long: UPF0344 protein MW0851 (129 aa).

4 helical membrane passes run 1-21 (MLHLHILSWVLAIILFIATYL), 36-56 (LHMILRLFMLLTLISGFWILI), 67-87 (MLLTLKMLCGVAVVGLMEVSI), and 99-119 (MFWITMALIIITMVLGVILPL).

Belongs to the UPF0344 family.

It localises to the cell membrane. This Staphylococcus aureus (strain MW2) protein is UPF0344 protein MW0851.